The sequence spans 208 residues: Large ribosomal subunit protein bL25 (208 aa).

Residues 178–208 (LPPQQSEVPEPDSEEEPKEPEAIKEKDNDGE) form a disordered region. The segment covering 186-195 (PEPDSEEEPK) has biased composition (acidic residues). Over residues 196 to 208 (EPEAIKEKDNDGE) the composition is skewed to basic and acidic residues.

It belongs to the bacterial ribosomal protein bL25 family. CTC subfamily. Part of the 50S ribosomal subunit; part of the 5S rRNA/L5/L18/L25 subcomplex. Contacts the 5S rRNA. Binds to the 5S rRNA independently of L5 and L18.

Functionally, this is one of the proteins that binds to the 5S RNA in the ribosome where it forms part of the central protuberance. The chain is Large ribosomal subunit protein bL25 from Bacillus pumilus (strain SAFR-032).